Consider the following 232-residue polypeptide: MARGKIQIKRIENQTNRQVTYSKRRNGLFKKAHELTVLCDARVSIIMFSSSNKLHEYISPNTTTKEIVDLYQTISDVDVWATQYERMQETKRKLLETNRNLRTQIKQRLGECLDELDIQELRRLEDEMENTFKLVRERKFKSLGNQIETTKKKNKSQQDIQKNLIHELELRAEDPHYGLVDNGGDYDSVLGYQIEGSRAYALRFHQNHHHYYPNHGLHAPSASDIITFHLLE.

The MADS-box domain occupies 3 to 57 (RGKIQIKRIENQTNRQVTYSKRRNGLFKKAHELTVLCDARVSIIMFSSSNKLHEY). Positions 75–164 (SDVDVWATQY…KSQQDIQKNL (90 aa)) form a coiled coil. The region spanning 84-174 (YERMQETKRK…IHELELRAED (91 aa)) is the K-box domain.

As to quaternary structure, forms a heterodimer with PISTILLATA, capable of binding to CArG-box sequences. AP3/PI heterodimer binds AP1 or SEP3 to form complexes. In terms of tissue distribution, expressed in petals and stamens.

The protein resides in the nucleus. Functionally, probable transcription factor involved in the genetic control of flower development. Is required for normal development of petals and stamens in the wild-type flower. Forms a heterodimer with PISTILLATA that is required for autoregulation of both AP3 and PI genes. AP3/PI heterodimer interacts with APETALA1 or SEPALLATA3 to form a ternary complex that could be responsible for the regulation of the genes involved in the flower development. AP3/PI heterodimer activates the expression of NAP. AP3/PI prevents GATA22/GNL and GATA21/GNC expression. The protein is Floral homeotic protein APETALA 3 (AP3) of Arabidopsis thaliana (Mouse-ear cress).